The chain runs to 433 residues: Steroid hormone receptor ERR2 (433 aa).

The interval 1-41 (MSSEDRHLGSSCGSFIKTEPSSPSSGIDALSHHSPSGSSDA) is disordered. The segment covering 32-41 (HHSPSGSSDA) has biased composition (low complexity). Residues 93–211 (YMLNAIPKRL…SPPAKKPLTK (119 aa)) form an interaction with NANOG region. A DNA-binding region (nuclear receptor) is located at residues 100-186 (KRLCLVCGDI…RVRGGRQKYK (87 aa)). NR C4-type zinc fingers lie at residues 103 to 123 (CLVC…CEAC) and 139 to 163 (CPAT…FMKC). The tract at residues 203–433 (PPAKKPLTKI…LFLEMLEAKV (231 aa)) is essential for ESRRB transcriptional activity and interaction with NCOA3. The NR LBD domain occupies 208–432 (PLTKIVSYLL…KLFLEMLEAK (225 aa)).

Belongs to the nuclear hormone receptor family. NR3 subfamily. Binds DNA as a monomer. Interacts with NR0B1; represses ESRRB activity at the GATA6 promoter. Interacts with NANOG; reciprocally modulates their transcriptional activities and activates POU5F1 expression. Interacts with NCOA3; mediates the interaction between ESRRB and RNA polymerase II complexes and allows NCOA3 corecruitment to ESRRB, KLF4, NANOG, and SOX2 enhancer regions to trigger ESRRB-dependent gene activation involved in self-renewal and pluripotency. Interacts with KDM1A; co-occupes the core set of ESRRB targets including ELF5 and EOMES. Interacts with the multiprotein complex Integrator, at least composed of INTS1, INTS2, INTS3, INTS4, INTS5, INTS6, INTS7, INTS8, INTS9/RC74, INTS10, INTS11/CPSF3L and INTS12; ESRRB is probably not a core component of the integrator complex and associates to integrator via its interaction with INTS1 and INTS9; attracts the transcriptional machinery. Interacts with JARID2. Interacts with POU5F1; recruits ESRRB near the POU5F1-SOX2 element in the NANOG proximal promoter leading to activation of NANOG expression; the interaction is DNA independent. Post-translationally, acetylated by PCAF/KAT2 (in vitro).

The protein localises to the nucleus. The protein resides in the cytoplasm. Its subcellular location is the chromosome. Transcription factor that binds a canonical ESRRB recognition (ERRE) sequence 5'TCAAGGTCA-3' localized on promoter and enhancer of targets genes regulating their expression or their transcription activity. Plays a role, in a LIF independent manner, in maintainance of self-renewal and pluripotency of embryonic and trophoblast stem cells through different signaling pathways including FGF signaling pathway and Wnt signaling pathways. Involved in morula development (2-16 cells embryos) by acting as a regulator at the 8-cell stage. Upon FGF signaling pathway activation, interacts with KDM1A by directly binding to enhancer site of ELF5 and EOMES and activating their transcription leading to self-renewal of trophoblast stem cells. Also regulates expression of multiple rod-specific genes and is required for survival of this cell type. Plays a role as transcription factor activator of GATA6, NR0B1, POU5F1 and PERM1. Plays a role as transcription factor repressor of NFE2L2 transcriptional activity and ESR1 transcriptional activity. During mitosis remains bound to a subset of interphase target genes, including pluripotency regulators, through the canonical ESRRB recognition (ERRE) sequence, leading to their transcriptional activation in early G1 phase. Can coassemble on structured DNA elements with other transcription factors like SOX2, POU5F1, KDM1A and NCOA3 to trigger ESRRB-dependent gene activation. This mechanism, in the case of SOX2 corecruitment prevents the embryonic stem cells (ESCs) to epiblast stem cells (EpiSC) transition through positive regulation of NR0B1 that inhibits the EpiSC transcriptional program. Also plays a role inner ear development by controlling expression of ion channels and transporters and in early placentation. The chain is Steroid hormone receptor ERR2 from Rattus norvegicus (Rat).